Reading from the N-terminus, the 221-residue chain is D-glycero-alpha-D-manno-heptose 1-phosphate guanylyltransferase (221 aa).

Belongs to the D-alpha-D-heptose-1-P guanylyltransferase family.

It carries out the reaction D-glycero-alpha-D-manno-heptose 1-phosphate + GTP + H(+) = GDP-D-glycero-alpha-D-manno-heptose + diphosphate. It functions in the pathway nucleotide-sugar biosynthesis; GDP-D-glycero-alpha-D-manno-heptose biosynthesis; GDP-D-glycero-alpha-D-manno-heptose from D-glycero-alpha-D-manno-heptose 7-phosphate: step 3/3. Its pathway is capsule biogenesis; capsule polysaccharide biosynthesis. Its function is as follows. Catalyzes the GDP transfer from GTP to D-glycero-alpha-D-manno-heptose 1-phosphate, yielding GDP-D-alpha-D-heptose. Is able to use ATP, CTP or UTP as substrate in the presence of pyrophosphatase, but at a significantly slower rate. Can also form GDP-alpha-D-mannose from alpha-D-mannose 1-phosphate and GTP. In Campylobacter jejuni subsp. jejuni serotype O:2 (strain ATCC 700819 / NCTC 11168), this protein is D-glycero-alpha-D-manno-heptose 1-phosphate guanylyltransferase.